Reading from the N-terminus, the 446-residue chain is Argininosuccinate synthase (446 aa).

Residues 17 to 25 (AFSGGLDTS) and Ala-43 each bind ATP. Position 99 (Tyr-99) interacts with L-citrulline. Gly-129 and Thr-131 together coordinate ATP. Residues Thr-131, Asn-135, and Asp-136 each contribute to the L-aspartate site. Asn-135 is an L-citrulline binding site. Asp-136 serves as a coordination point for ATP. Positions 139 and 192 each coordinate L-citrulline. An ATP-binding site is contributed by Asp-194. Residues Thr-201, Glu-203, and Glu-280 each contribute to the L-citrulline site.

The protein belongs to the argininosuccinate synthase family. Type 2 subfamily. As to quaternary structure, homotetramer.

The protein localises to the cytoplasm. The enzyme catalyses L-citrulline + L-aspartate + ATP = 2-(N(omega)-L-arginino)succinate + AMP + diphosphate + H(+). The protein operates within amino-acid biosynthesis; L-arginine biosynthesis; L-arginine from L-ornithine and carbamoyl phosphate: step 2/3. The polypeptide is Argininosuccinate synthase (Methylibium petroleiphilum (strain ATCC BAA-1232 / LMG 22953 / PM1)).